The chain runs to 1077 residues: Error-prone DNA polymerase (1077 aa).

It belongs to the DNA polymerase type-C family. DnaE2 subfamily.

It is found in the cytoplasm. The enzyme catalyses DNA(n) + a 2'-deoxyribonucleoside 5'-triphosphate = DNA(n+1) + diphosphate. DNA polymerase involved in damage-induced mutagenesis and translesion synthesis (TLS). It is not the major replicative DNA polymerase. The sequence is that of Error-prone DNA polymerase from Brucella suis biovar 1 (strain 1330).